The following is a 486-amino-acid chain: Glutamyl-tRNA(Gln) amidotransferase subunit A (486 aa).

Catalysis depends on charge relay system residues Lys78 and Ser153. Ser177 acts as the Acyl-ester intermediate in catalysis.

This sequence belongs to the amidase family. GatA subfamily. As to quaternary structure, heterotrimer of A, B and C subunits.

The enzyme catalyses L-glutamyl-tRNA(Gln) + L-glutamine + ATP + H2O = L-glutaminyl-tRNA(Gln) + L-glutamate + ADP + phosphate + H(+). Its function is as follows. Allows the formation of correctly charged Gln-tRNA(Gln) through the transamidation of misacylated Glu-tRNA(Gln) in organisms which lack glutaminyl-tRNA synthetase. The reaction takes place in the presence of glutamine and ATP through an activated gamma-phospho-Glu-tRNA(Gln). The chain is Glutamyl-tRNA(Gln) amidotransferase subunit A from Desulfosudis oleivorans (strain DSM 6200 / JCM 39069 / Hxd3) (Desulfococcus oleovorans).